A 381-amino-acid chain; its full sequence is Beta-lactamase (381 aa).

A signal peptide spans 1–20 (MMKKSICCALLLTASFSTFA). Residue Ser-84 is the Acyl-ester intermediate of the active site. Tyr-170 serves as the catalytic Proton acceptor. Residue 335 to 337 (KTG) coordinates substrate.

It belongs to the class-C beta-lactamase family.

The protein resides in the periplasm. The catalysed reaction is a beta-lactam + H2O = a substituted beta-amino acid. Its activity is regulated as follows. Sulbactam is an effective progressive inhibitor but a poor competitive inhibitor. This protein is a serine beta-lactamase with a substrate specificity for cephalosporins. This chain is Beta-lactamase (ampC), found in Citrobacter freundii.